The following is a 257-amino-acid chain: Undecaprenyl-diphosphatase (257 aa).

The next 7 membrane-spanning stretches (helical) occupy residues 42-62, 76-96, 103-123, 136-156, 172-192, 209-229, and 237-257; these read YVLF…YMFL, IFHI…LKPI, PQYL…GVYF, CLTI…RSGA, IQFS…LEIW, QFLT…WAVI, and WVYF…YFQM.

Belongs to the UppP family.

It localises to the cell inner membrane. It carries out the reaction di-trans,octa-cis-undecaprenyl diphosphate + H2O = di-trans,octa-cis-undecaprenyl phosphate + phosphate + H(+). Its function is as follows. Catalyzes the dephosphorylation of undecaprenyl diphosphate (UPP). Confers resistance to bacitracin. This chain is Undecaprenyl-diphosphatase, found in Protochlamydia amoebophila (strain UWE25).